Reading from the N-terminus, the 301-residue chain is Averufin oxidase A (301 aa).

Positions 1-23 are cleaved as a signal peptide; that stretch reads MPTYALLGATGATGSAILRCLLA. Asn-62, Asn-86, and Asn-190 each carry an N-linked (GlcNAc...) asparagine glycan.

This sequence belongs to the avfA family.

The protein operates within mycotoxin biosynthesis. Functionally, averufin oxidase A; part of the fragmented gene cluster that mediates the biosynthesis of dothistromin (DOTH), a polyketide toxin very similar in structure to the aflatoxin precursor, versicolorin B. The first step of the pathway is the conversion of acetate to norsolorinic acid (NOR) and requires the fatty acid synthase subunits hexA and hexB, as well as the polyketide synthase pksA. PksA combines a hexanoyl starter unit and 7 malonyl-CoA extender units to synthesize the precursor NOR. The hexanoyl starter unit is provided to the acyl-carrier protein (ACP) domain by the fungal fatty acid synthase hexA/hexB. The second step is the conversion of NOR to averantin (AVN) and requires the norsolorinic acid ketoreductase nor1, which catalyzes the dehydration of norsolorinic acid to form (1'S)-averantin. The cytochrome P450 monooxygenase avnA then catalyzes the hydroxylation of AVN to 5'hydroxyaverantin (HAVN). The next step is performed by adhA that transforms HAVN to averufin (AVF). Averufin might then be converted to hydroxyversicolorone by cypX and avfA. Hydroxyversicolorone is further converted versiconal hemiacetal acetate (VHA) by moxY. VHA is then the substrate for the versiconal hemiacetal acetate esterase est1 to yield versiconal (VAL). Versicolorin B synthase vbsA then converts VAL to versicolorin B (VERB) by closing the bisfuran ring. Then, the activity of the versicolorin B desaturase verB leads to versicolorin A (VERA). DotB, a predicted chloroperoxidase, may perform epoxidation of the A-ring of VERA. Alternatively, a cytochrome P450, such as cypX or avnA could catalyze this step. It is also possible that another, uncharacterized, cytochrome P450 enzyme is responsible for this step. Opening of the epoxide could potentially be achieved by the epoxide hydrolase epoA. However, epoA seems not to be required for DOTH biosynthesis, but other epoxide hydrolases may have the ability to complement this hydrolysis. Alternatively, opening of the epoxide ring could be achieved non-enzymatically. The next step is the deoxygenation of ring A to yield the 5,8-dihydroxyanthraquinone which is most likely catalyzed by the NADPH dehydrogenase encoded by ver1. The last stages of DOTH biosynthesis are proposed to involve hydroxylation of the bisfuran. OrdB and norB might have oxidative roles here. An alternative possibility is that cytochrome P450 monoogenases such as avnA and cypX might perform these steps in addition to previously proposed steps. This chain is Averufin oxidase A, found in Dothistroma septosporum (Red band needle blight fungus).